The chain runs to 524 residues: Methylmalonyl-CoA carboxyltransferase 12S subunit (524 aa).

Positions methionine 13–asparagine 268 constitute a CoA carboxyltransferase N-terminal domain. Residues methionine 13–methionine 506 form a carboxyltransferase region. One can recognise a CoA carboxyltransferase C-terminal domain in the interval serine 274–methionine 506.

As to quaternary structure, homohexamer. Transcarboxylase is composed of three subunits: 1.3S, 5S, and 12S. The core of the enzyme is composed of six 12S subunits. On each side of the core there are three pairs of 5S subunits. Each 5S dimer is attached to the core by two 1.3S subunits. Thus the total number of chains is 30 (6 + 12 + 12).

It catalyses the reaction (S)-methylmalonyl-CoA + pyruvate = propanoyl-CoA + oxaloacetate. The 12S subunit specifically catalyzes the transfer of the carboxyl group of methylmalonyl CoA to the biotin of the 1.3S subunit forming propanoyl-CoA and carboxylated 1.3S-biotin. In Propionibacterium freudenreichii subsp. shermanii, this protein is Methylmalonyl-CoA carboxyltransferase 12S subunit.